We begin with the raw amino-acid sequence, 68 residues long: Protein SlyX homolog (68 aa).

The protein belongs to the SlyX family.

The protein is Protein SlyX homolog of Brucella abortus (strain S19).